The sequence spans 308 residues: Methionyl-tRNA formyltransferase (308 aa).

109–112 is a binding site for (6S)-5,6,7,8-tetrahydrofolate; that stretch reads SLLP.

It belongs to the Fmt family.

The catalysed reaction is L-methionyl-tRNA(fMet) + (6R)-10-formyltetrahydrofolate = N-formyl-L-methionyl-tRNA(fMet) + (6S)-5,6,7,8-tetrahydrofolate + H(+). In terms of biological role, attaches a formyl group to the free amino group of methionyl-tRNA(fMet). The formyl group appears to play a dual role in the initiator identity of N-formylmethionyl-tRNA by promoting its recognition by IF2 and preventing the misappropriation of this tRNA by the elongation apparatus. The polypeptide is Methionyl-tRNA formyltransferase (Rhizorhabdus wittichii (strain DSM 6014 / CCUG 31198 / JCM 15750 / NBRC 105917 / EY 4224 / RW1) (Sphingomonas wittichii)).